Consider the following 417-residue polypeptide: UDP-N-acetylmuramoylalanine--D-glutamate ligase (417 aa).

Position 108-114 (108-114) interacts with ATP; it reads GSNGKTT.

It belongs to the MurCDEF family.

It localises to the cytoplasm. It carries out the reaction UDP-N-acetyl-alpha-D-muramoyl-L-alanine + D-glutamate + ATP = UDP-N-acetyl-alpha-D-muramoyl-L-alanyl-D-glutamate + ADP + phosphate + H(+). The protein operates within cell wall biogenesis; peptidoglycan biosynthesis. Functionally, cell wall formation. Catalyzes the addition of glutamate to the nucleotide precursor UDP-N-acetylmuramoyl-L-alanine (UMA). The sequence is that of UDP-N-acetylmuramoylalanine--D-glutamate ligase from Chlamydia pneumoniae (Chlamydophila pneumoniae).